We begin with the raw amino-acid sequence, 218 residues long: 7-cyano-7-deazaguanine synthase (218 aa).

9–19 serves as a coordination point for ATP; that stretch reads YSGGMDSFTVL. The Zn(2+) site is built by cysteine 185, cysteine 193, cysteine 196, and cysteine 199.

It belongs to the QueC family. Requires Zn(2+) as cofactor.

It carries out the reaction 7-carboxy-7-deazaguanine + NH4(+) + ATP = 7-cyano-7-deazaguanine + ADP + phosphate + H2O + H(+). The protein operates within purine metabolism; 7-cyano-7-deazaguanine biosynthesis. Its function is as follows. Catalyzes the ATP-dependent conversion of 7-carboxy-7-deazaguanine (CDG) to 7-cyano-7-deazaguanine (preQ(0)). The sequence is that of 7-cyano-7-deazaguanine synthase from Pseudoalteromonas translucida (strain TAC 125).